The chain runs to 167 residues: Small ribosomal subunit protein uS5 (167 aa).

Residues 12-75 (LEDQVVSINR…DAAKKSLIEV (64 aa)) form the S5 DRBM domain.

It belongs to the universal ribosomal protein uS5 family. In terms of assembly, part of the 30S ribosomal subunit. Contacts proteins S4 and S8.

In terms of biological role, with S4 and S12 plays an important role in translational accuracy. Located at the back of the 30S subunit body where it stabilizes the conformation of the head with respect to the body. The polypeptide is Small ribosomal subunit protein uS5 (Lacticaseibacillus paracasei (strain ATCC 334 / BCRC 17002 / CCUG 31169 / CIP 107868 / KCTC 3260 / NRRL B-441) (Lactobacillus paracasei)).